The following is a 392-amino-acid chain: Lipid-A-disaccharide synthase (392 aa).

The protein belongs to the LpxB family.

The catalysed reaction is a lipid X + a UDP-2-N,3-O-bis[(3R)-3-hydroxyacyl]-alpha-D-glucosamine = a lipid A disaccharide + UDP + H(+). It functions in the pathway bacterial outer membrane biogenesis; LPS lipid A biosynthesis. Condensation of UDP-2,3-diacylglucosamine and 2,3-diacylglucosamine-1-phosphate to form lipid A disaccharide, a precursor of lipid A, a phosphorylated glycolipid that anchors the lipopolysaccharide to the outer membrane of the cell. This is Lipid-A-disaccharide synthase from Bradyrhizobium diazoefficiens (strain JCM 10833 / BCRC 13528 / IAM 13628 / NBRC 14792 / USDA 110).